Reading from the N-terminus, the 467-residue chain is Chromosomal replication initiator protein DnaA (467 aa).

The interval 1–90 (MSLSLWQQCL…KPVTQTPQAA (90 aa)) is domain I, interacts with DnaA modulators. The tract at residues 91 to 130 (VTSNVAAPALVAQTQPQRAAPSTRSGWDNVPAPAEPTYRS) is domain II. The interval 131–347 (NVNVKHTFDN…GALNRVIANA (217 aa)) is domain III, AAA+ region. 4 residues coordinate ATP: Gly-175, Gly-177, Lys-178, and Thr-179. The tract at residues 348–467 (NFTGRAITID…FSNLIRTLSS (120 aa)) is domain IV, binds dsDNA.

It belongs to the DnaA family. Oligomerizes as a right-handed, spiral filament on DNA at oriC.

Its subcellular location is the cytoplasm. In terms of biological role, plays an essential role in the initiation and regulation of chromosomal replication. ATP-DnaA binds to the origin of replication (oriC) to initiate formation of the DNA replication initiation complex once per cell cycle. Binds the DnaA box (a 9 base pair repeat at the origin) and separates the double-stranded (ds)DNA. Forms a right-handed helical filament on oriC DNA; dsDNA binds to the exterior of the filament while single-stranded (ss)DNA is stabiized in the filament's interior. The ATP-DnaA-oriC complex binds and stabilizes one strand of the AT-rich DNA unwinding element (DUE), permitting loading of DNA polymerase. After initiation quickly degrades to an ADP-DnaA complex that is not apt for DNA replication. Binds acidic phospholipids. The sequence is that of Chromosomal replication initiator protein DnaA from Shigella dysenteriae serotype 1 (strain Sd197).